Consider the following 400-residue polypeptide: Elongation factor Tu 1 (400 aa).

The region spanning 10-209 (KPHVNIGTIG…AVDEYIPTPQ (200 aa)) is the tr-type G domain. The segment at 19-26 (GHVDHGKT) is G1. 19–26 (GHVDHGKT) serves as a coordination point for GTP. T26 provides a ligand contact to Mg(2+). Positions 60–64 (GITIN) are G2. Positions 81-84 (DCPG) are G3. Residues 81–85 (DCPGH) and 136–139 (NKAD) contribute to the GTP site. The segment at 136–139 (NKAD) is G4. The segment at 174–176 (SAL) is G5.

This sequence belongs to the TRAFAC class translation factor GTPase superfamily. Classic translation factor GTPase family. EF-Tu/EF-1A subfamily. In terms of assembly, monomer.

Its subcellular location is the cytoplasm. The enzyme catalyses GTP + H2O = GDP + phosphate + H(+). In terms of biological role, GTP hydrolase that promotes the GTP-dependent binding of aminoacyl-tRNA to the A-site of ribosomes during protein biosynthesis. In Pelotomaculum thermopropionicum (strain DSM 13744 / JCM 10971 / SI), this protein is Elongation factor Tu 1.